The following is a 509-amino-acid chain: Coiled-coil domain-containing protein 181 (509 aa).

Over residues 46-82 (ENINQDLKENETVMEHTKRHSDPDKSLQDEVSPRRND) the composition is skewed to basic and acidic residues. Disordered regions lie at residues 46–120 (ENIN…EEED) and 241–367 (PINN…EEKE). 2 stretches are compositionally biased toward polar residues: residues 243–266 (NNAN…SVSG) and 300–334 (TCPS…STYC). Positions 335–375 (LSPRQKELQKQLEEKREKLKREEERRKIEEEKEKKRENDIV) form a coiled coil. Residues 338 to 367 (RQKELQKQLEEKREKLKREEERRKIEEEKE) are compositionally biased toward basic and acidic residues.

This sequence belongs to the CCDC181 family. As to quaternary structure, homodimer. Interacts with HOOK1. Interacts with HOOK2. Interacts with HOOK3.

The protein resides in the cytoplasm. Its subcellular location is the cytoskeleton. It localises to the cell projection. It is found in the cilium. The protein localises to the flagellum. Its function is as follows. Microtubule-binding protein that localizes to the microtubular manchette of elongating spermatids. This chain is Coiled-coil domain-containing protein 181, found in Homo sapiens (Human).